Here is a 222-residue protein sequence, read N- to C-terminus: 7-cyano-7-deazaguanine synthase (222 aa).

An ATP-binding site is contributed by 8–18 (LSGGLDSATCL). Positions 187, 197, 200, and 203 each coordinate Zn(2+).

This sequence belongs to the QueC family. It depends on Zn(2+) as a cofactor.

The enzyme catalyses 7-carboxy-7-deazaguanine + NH4(+) + ATP = 7-cyano-7-deazaguanine + ADP + phosphate + H2O + H(+). The protein operates within purine metabolism; 7-cyano-7-deazaguanine biosynthesis. Catalyzes the ATP-dependent conversion of 7-carboxy-7-deazaguanine (CDG) to 7-cyano-7-deazaguanine (preQ(0)). The chain is 7-cyano-7-deazaguanine synthase from Alcanivorax borkumensis (strain ATCC 700651 / DSM 11573 / NCIMB 13689 / SK2).